The chain runs to 219 residues: MKSFVVAPFIVAIDGPAASGKGTLARRIATHYGMPHLDTGLTYRAVAKALLDKGLPLDDEALATDAALSLDLLAMDKAVLSAHAIGEAASKVAVMPAVRRALVEAQRHFANALPSSVLDGRDIGTVVCPDAAIKLFVTASPEVRARRRFDEVLARGDTADFAEILADLKKRDERDMNRTDSPLRPAEDAHLLDTSEMSIEAAFLAAKKLIDHALAQHRG.

15 to 23 (GPAASGKGT) provides a ligand contact to ATP.

It belongs to the cytidylate kinase family. Type 1 subfamily.

The protein resides in the cytoplasm. It carries out the reaction CMP + ATP = CDP + ADP. The catalysed reaction is dCMP + ATP = dCDP + ADP. The chain is Cytidylate kinase from Brucella melitensis biotype 2 (strain ATCC 23457).